A 621-amino-acid chain; its full sequence is 1,4-alpha-glucan branching enzyme GlgB (621 aa).

Aspartate 302 (nucleophile) is an active-site residue. The active-site Proton donor is glutamate 355.

The protein belongs to the glycosyl hydrolase 13 family. GlgB subfamily. As to quaternary structure, monomer.

The catalysed reaction is Transfers a segment of a (1-&gt;4)-alpha-D-glucan chain to a primary hydroxy group in a similar glucan chain.. It participates in glycan biosynthesis; glycogen biosynthesis. Its function is as follows. Catalyzes the formation of the alpha-1,6-glucosidic linkages in glycogen by scission of a 1,4-alpha-linked oligosaccharide from growing alpha-1,4-glucan chains and the subsequent attachment of the oligosaccharide to the alpha-1,6 position. This chain is 1,4-alpha-glucan branching enzyme GlgB, found in Dechloromonas aromatica (strain RCB).